A 1524-amino-acid chain; its full sequence is Protein dispatched homolog 1 (1524 aa).

Asn-59 carries N-linked (GlcNAc...) asparagine glycosylation. The next 4 helical transmembrane spans lie at 190–210 (VVVL…GVLV), 500–520 (LLMD…VMCV), 525–545 (MFIT…SYFL), and 549–569 (VFHF…LVGI). An SSD domain is found at 486-658 (GIEFGIKHSL…VTWLPAVVVL (173 aa)). Asn-582 carries an N-linked (GlcNAc...) asparagine glycan. A run of 8 helical transmembrane segments spans residues 604 to 624 (AALS…ANYV), 638 to 658 (GTAI…VVVL), 719 to 739 (YLWL…VCIN), 988 to 1008 (MGLS…NIII), 1010 to 1030 (LYAI…LVLL), 1040 to 1060 (VTIS…GVAY), 1079 to 1099 (VGSA…MMMP), and 1107 to 1127 (QLGT…TFFF).

The protein belongs to the dispatched family. In terms of assembly, interacts with SHH via the cholesterol anchor of the dually lipid-modified SHH (ShhNp).

It is found in the membrane. In terms of biological role, functions in hedgehog (Hh) signaling. Regulates the release and extracellular accumulation of cholesterol-modified hedgehog proteins and is hence required for effective production of the Hh signal. Synergizes with SCUBE2 to cause an increase in SHH secretion. This Homo sapiens (Human) protein is Protein dispatched homolog 1 (DISP1).